Reading from the N-terminus, the 404-residue chain is MSYTFSTYETLALASLVLLLGYFLVKRINVLKTFNIPEPVVGGFIVAIGLLIWHKIDGTSFNFDKNLQTTMMLVFFTSIGLSANFSRLIKGGKPLVVFLFIAALLIFGQNVIGIASSMALGIHPAYGLLAGSVTLTGGHGTGAAWADTFAHQFNLQGATEIAIACATFGLVFGGIIGGPVARFLLNRQKQGENPENDEVDDIQEAFEHPTYKRKITARSLIETIAMISVCLLIGQYLDVQTKGTALQLPTFVWCLFTGVIVRNILTNIFRFQVAESAIDVLGSVGLSIFLAIALMSLRLWELAGLAIDVLIVLAIQVAFMAAFAIFITYRAMGKDYDAVVLSAGHCGFGLGATPTAIANMQAVTSRFGPSHKAFLIVPMVGAFFIDLINAALLKVSFAVVNILA.

The next 11 helical transmembrane spans lie at 5-25 (FSTY…YFLV), 33-53 (TFNI…LLIW), 69-89 (TTMM…SRLI), 95-115 (LVVF…IGIA), 161-181 (IAIA…GPVA), 219-239 (SLIE…YLDV), 245-265 (ALQL…RNIL), 277-297 (AIDV…LMSL), 307-327 (IDVL…AIFI), 338-358 (AVVL…TAIA), and 373-393 (AFLI…AALL).

Belongs to the glutamate:Na(+) symporter (ESS) (TC 2.A.27) family.

The protein localises to the cell inner membrane. In terms of biological role, catalyzes the sodium-dependent transport of glutamate. This Haemophilus influenzae (strain ATCC 51907 / DSM 11121 / KW20 / Rd) protein is Sodium/glutamate symporter.